Consider the following 177-residue polypeptide: 2''-aminoglycoside nucleotidyltransferase (177 aa).

3 residues coordinate Mg(2+): aspartate 44, aspartate 46, and aspartate 86. Aspartate 86 functions as the Proton acceptor in the catalytic mechanism.

The cofactor is Mg(2+).

The catalysed reaction is nucleoside triphosphate + gentamicin = diphosphate + 2''-nucleotidylgentamicin.. Mediates bacterial resistance to kanamycin, gentamicin, dibekacin, sisomicin, neomycin and tobramycin by adenylating the 2''-hydroxyl group of these antibiotics. The protein is 2''-aminoglycoside nucleotidyltransferase (aadB) of Klebsiella pneumoniae.